Here is a 189-residue protein sequence, read N- to C-terminus: Homeobox protein HD-2 (189 aa).

Positions 119 to 181 form a DNA-binding region, homeobox; TALE-type; the sequence is KPRTRANFPM…NARRRILPFM (63 aa).

This sequence belongs to the TALE/KNOX homeobox family.

Its subcellular location is the nucleus. The sequence is that of Homeobox protein HD-2 (HD-2) from Encephalitozoon cuniculi (strain GB-M1) (Microsporidian parasite).